The following is a 213-amino-acid chain: Coiled-coil domain-containing protein 43 (213 aa).

The stretch at 119-206 (RKEAVLAQYA…ERKDKEKKRT (88 aa)) forms a coiled coil. The segment at 127–213 (YANVTDDEDE…KRTQKGERKR (87 aa)) is disordered. The segment covering 131–142 (TDDEDEAEEEEQ) has biased composition (acidic residues). Over residues 169–200 (QRDQAKEDAQKKKEQDKMQREKDKLSKQERKD) the composition is skewed to basic and acidic residues. Over residues 201 to 213 (KEKKRTQKGERKR) the composition is skewed to basic residues.

This sequence belongs to the CCDC43 family.

The polypeptide is Coiled-coil domain-containing protein 43 (ccdc43) (Danio rerio (Zebrafish)).